The chain runs to 1169 residues: Chromosome partition protein Smc (1169 aa).

Pro32–Asn39 provides a ligand contact to ATP. Coiled coils occupy residues Ile170–Glu265 and Ile307–Asn481. Positions Asp525–Glu620 constitute an SMC hinge domain. 2 coiled-coil regions span residues Ala656–Ala914 and Arg985–Ala1014.

It belongs to the SMC family. Homodimer.

Its subcellular location is the cytoplasm. In terms of biological role, required for chromosome condensation and partitioning. The chain is Chromosome partition protein Smc from Methylococcus capsulatus (strain ATCC 33009 / NCIMB 11132 / Bath).